The following is a 355-amino-acid chain: RNA binding protein fox-1 homolog 1 (355 aa).

Residues 1-123 (MNCEREQLRG…QPKRLHVSNI (123 aa)) form a disordered region. A compositionally biased stretch (polar residues) spans 70-112 (QSHSEQSAADTSAHTVSGTATTDDSAPTDGQPQTQPSENTENK). In terms of domain architecture, RRM spans 116–174 (KRLHVSNIPFRFRDPDLRQMFGGFGFVTFENSADADRAREKLHGTVVEGRKIEVNNATA). Arginine 298 carries the asymmetric dimethylarginine modification.

Binds to the C-terminus of ATXN2.

The protein resides in the nucleus. Its subcellular location is the cytoplasm. RNA-binding protein that regulates alternative splicing events by binding to 5'-UGCAUGU-3' elements. Prevents binding of U2AF2 to the 3'-splice site. Regulates alternative splicing of tissue-specific exons and of differentially spliced exons during erythropoiesis. The sequence is that of RNA binding protein fox-1 homolog 1 (RBFOX1) from Bos taurus (Bovine).